A 93-amino-acid chain; its full sequence is Large ribosomal subunit protein uL23cz/uL23cy (93 aa).

It belongs to the universal ribosomal protein uL23 family. Part of the 50S ribosomal subunit.

Its subcellular location is the plastid. It is found in the chloroplast. In terms of biological role, binds to 23S rRNA. The protein is Large ribosomal subunit protein uL23cz/uL23cy (rpl23-A) of Eucalyptus globulus subsp. globulus (Tasmanian blue gum).